A 222-amino-acid polypeptide reads, in one-letter code: Glutathione-specific gamma-glutamylcyclotransferase 1 (222 aa).

The segment covering 1 to 22 (MKQESAAPNTPPTSQSPTPSAQ) has biased composition (low complexity). The segment at 1-24 (MKQESAAPNTPPTSQSPTPSAQFP) is disordered. Residue 35-40 (IFGYGS) participates in substrate binding. Residue Glu-115 is the Proton acceptor of the active site.

The protein belongs to the gamma-glutamylcyclotransferase family. ChaC subfamily. As to quaternary structure, interacts with NOTCH1 (via extracellular region).

Its subcellular location is the cytoplasm. It localises to the cytosol. It is found in the golgi apparatus. The protein localises to the trans-Golgi network. It catalyses the reaction glutathione = L-cysteinylglycine + 5-oxo-L-proline. Catalyzes the cleavage of glutathione into 5-oxo-L-proline and a Cys-Gly dipeptide. Acts specifically on glutathione, but not on other gamma-glutamyl peptides. Glutathione depletion is an important factor for apoptosis initiation and execution. Acts as a pro-apoptotic component of the unfolded protein response pathway by mediating the pro-apoptotic effects of the ATF4-ATF3-DDIT3/CHOP cascade. Negative regulator of Notch signaling pathway involved in embryonic neurogenesis: acts by inhibiting Notch cleavage by furin, maintaining Notch in an immature inactive form, thereby promoting neurogenesis in embryos. The chain is Glutathione-specific gamma-glutamylcyclotransferase 1 from Homo sapiens (Human).